The primary structure comprises 325 residues: Delta(1)-pyrroline-2-carboxylate reductase (325 aa).

Belongs to the ornithine cyclodeaminase/mu-crystallin family.

It catalyses the reaction L-proline + NAD(+) = 1-pyrroline-2-carboxylate + NADH + H(+). The enzyme catalyses L-proline + NADP(+) = 1-pyrroline-2-carboxylate + NADPH + H(+). Functionally, catalyzes the reduction of Delta(1)-pyrroline-2-carboxylate (Pyr2C) to L-proline, using preferentially NADPH over NADH as the electron donor. May be involved in a degradation pathway that converts trans-3-hydroxy-L-proline (t3LHyp) to L-proline. This chain is Delta(1)-pyrroline-2-carboxylate reductase, found in Bacillus cereus (strain ZK / E33L).